A 475-amino-acid polypeptide reads, in one-letter code: Erythroid membrane-associated protein (475 aa).

Residues 1-29 form the signal peptide; it reads MEMASSAGSWLSGCLIPLVFLRLSVHVSG. Positions 30–140 constitute an Ig-like V-type domain; that stretch reads HAGDAGKFHV…GNLSKEDTVI (111 aa). Residues 30-155 are Extracellular-facing; the sequence is HAGDAGKFHV…PSVGSLSPSA (126 aa). C50 and C126 are oxidised to a cystine. N132 is a glycosylation site (N-linked (GlcNAc...) asparagine). A helical membrane pass occupies residues 156 to 176; that stretch reads VALAVILPVLVLLIMVCLCLI. The Cytoplasmic segment spans residues 177-475; the sequence is WKQRRAKEKL…ALQELKAPSF (299 aa). Residues 220 to 418 form the B30.2/SPRY domain; the sequence is KLKRAAANSG…LVICSELHKS (199 aa). The residue at position 418 (S418) is a Phosphoserine.

The protein belongs to the immunoglobulin superfamily. BTN/MOG family. Glycosylated. In terms of tissue distribution, expressed in erythroid-enriched bone marrow (at protein level). Highly expressed in bone marrow and to a lower extent in leukocytes, thymus, lymph node and spleen.

It localises to the cell membrane. Its subcellular location is the cytoplasm. Functionally, possible role as a cell-adhesion or receptor molecule of erythroid cells. The chain is Erythroid membrane-associated protein (ERMAP) from Homo sapiens (Human).